We begin with the raw amino-acid sequence, 142 residues long: MFLGTHTPKLDEKGRFFLPAKFRDELDDGLVITRGQDRCLAIYPTETFVEMTREIAKGSVSVKKVRDYQRMLAAGASDTAPDKQGRVMIPPMLRRYAALNKEIVVVGAITRVEVWDATEWEKYSEAQEEAFADMNEEVFAEQ.

SpoVT-AbrB domains follow at residues 5 to 47 and 76 to 119; these read THTP…PTET and ASDT…DATE.

Belongs to the MraZ family. In terms of assembly, forms oligomers.

Its subcellular location is the cytoplasm. The protein resides in the nucleoid. The sequence is that of Transcriptional regulator MraZ from Cutibacterium acnes (strain DSM 16379 / KPA171202) (Propionibacterium acnes).